Here is a 99-residue protein sequence, read N- to C-terminus: Orphan antixoxin protein TacA (99 aa).

This sequence belongs to the TacA antitoxin family.

Functionally, putative antitoxin component of a toxin-antitoxin (TA) system; its cognate toxin (usually a tRNA acetylase) is unknown. In Haemophilus influenzae (strain ATCC 51907 / DSM 11121 / KW20 / Rd), this protein is Orphan antixoxin protein TacA.